We begin with the raw amino-acid sequence, 356 residues long: Arginine kinase (356 aa).

Residue Ala2 is modified to N-acetylalanine. The region spanning 9–91 is the Phosphagen kinase N-terminal domain; sequence KLEAGFKKLE…FDPIIEDYHV (83 aa). An L-arginine-binding site is contributed by 64–68; it reads GVGIY. Residues 119-356 enclose the Phosphagen kinase C-terminal domain; the sequence is YVISTRVRCG…LELIKMEKEM (238 aa). ATP contacts are provided by residues 122 to 126 and His185; that span reads STRVR. L-arginine is bound at residue Glu225. Arg229 is an ATP binding site. Cys271 lines the L-arginine pocket. Residues 280–284 and 309–314 contribute to the ATP site; these read RASVH and RGTRGE. Glu314 serves as a coordination point for L-arginine.

The protein belongs to the ATP:guanido phosphotransferase family.

It catalyses the reaction L-arginine + ATP = N(omega)-phospho-L-arginine + ADP + H(+). The chain is Arginine kinase from Penaeus monodon (Giant tiger prawn).